A 399-amino-acid polypeptide reads, in one-letter code: Glutamine synthetase 1, mitochondrial (399 aa).

A mitochondrion-targeting transit peptide spans 1–27 (MALRVAGLFLKKELVAPATQQLRLLRT). The GS beta-grasp domain occupies 62 to 143 (VQATYLWIDG…VLCDTYSADG (82 aa)). Positions 150–399 (KRAAFQAAID…AIVRTCLLNE (250 aa)) constitute a GS catalytic domain.

This sequence belongs to the glutamine synthetase family. In terms of assembly, homooctamer.

The protein localises to the mitochondrion. The catalysed reaction is L-glutamate + NH4(+) + ATP = L-glutamine + ADP + phosphate + H(+). This is Glutamine synthetase 1, mitochondrial (Gs1) from Drosophila melanogaster (Fruit fly).